The primary structure comprises 123 residues: Transmembrane protein 254 (123 aa).

Helical transmembrane passes span L15–P35, N63–C83, and L95–Y115.

It is found in the membrane. This is Transmembrane protein 254 from Mus musculus (Mouse).